We begin with the raw amino-acid sequence, 625 residues long: tRNA uridine 5-carboxymethylaminomethyl modification enzyme MnmG (625 aa).

Residues G13 to G18, V125, and S182 each bind FAD. G276–F290 lines the NAD(+) pocket. Q373 contributes to the FAD binding site.

The protein belongs to the MnmG family. Homodimer. Heterotetramer of two MnmE and two MnmG subunits. FAD serves as cofactor.

The protein resides in the cytoplasm. NAD-binding protein involved in the addition of a carboxymethylaminomethyl (cmnm) group at the wobble position (U34) of certain tRNAs, forming tRNA-cmnm(5)s(2)U34. In Lactococcus lactis subsp. cremoris (strain SK11), this protein is tRNA uridine 5-carboxymethylaminomethyl modification enzyme MnmG.